A 493-amino-acid chain; its full sequence is ATP synthase subunit beta, chloroplastic (493 aa).

170–177 (GGAGVGKT) contributes to the ATP binding site.

Belongs to the ATPase alpha/beta chains family. In terms of assembly, F-type ATPases have 2 components, CF(1) - the catalytic core - and CF(0) - the membrane proton channel. CF(1) has five subunits: alpha(3), beta(3), gamma(1), delta(1), epsilon(1). CF(0) has four main subunits: a(1), b(1), b'(1) and c(9-12).

It is found in the plastid. Its subcellular location is the chloroplast thylakoid membrane. The catalysed reaction is ATP + H2O + 4 H(+)(in) = ADP + phosphate + 5 H(+)(out). In terms of biological role, produces ATP from ADP in the presence of a proton gradient across the membrane. The catalytic sites are hosted primarily by the beta subunits. In Lachenalia pusilla (Cape cowslips), this protein is ATP synthase subunit beta, chloroplastic.